The chain runs to 95 residues: Protein translocase subunit SecE (95 aa).

The disordered stretch occupies residues 1–35 (MTDAVGSIDMPDAEDEAPESKKKSRKGGKRGKKGP). Positions 22–35 (KKSRKGGKRGKKGP) are enriched in basic residues. The chain crosses the membrane as a helical span at residues 67-87 (VVIVFVVVMIGLVTVLDIGFA).

This sequence belongs to the SecE/SEC61-gamma family. In terms of assembly, component of the Sec protein translocase complex. Heterotrimer consisting of SecY, SecE and SecG subunits. The heterotrimers can form oligomers, although 1 heterotrimer is thought to be able to translocate proteins. Interacts with the ribosome. Interacts with SecDF, and other proteins may be involved. Interacts with SecA.

It localises to the cell membrane. Its function is as follows. Essential subunit of the Sec protein translocation channel SecYEG. Clamps together the 2 halves of SecY. May contact the channel plug during translocation. The protein is Protein translocase subunit SecE of Streptomyces griseus.